Consider the following 452-residue polypeptide: GTPase Der (452 aa).

EngA-type G domains are found at residues 4–169 (PVVA…PPQD) and 177–352 (IQMA…EQHR). Residues 10–17 (GRPNVGKS), 57–61 (DTGGL), 120–123 (NKCE), 183–190 (GRPNVGKS), 230–234 (DTAGI), and 295–298 (NKWD) each bind GTP. In terms of domain architecture, KH-like spans 353–438 (RRVTTAVVNE…PVRLFWRGKQ (86 aa)).

This sequence belongs to the TRAFAC class TrmE-Era-EngA-EngB-Septin-like GTPase superfamily. EngA (Der) GTPase family. As to quaternary structure, associates with the 50S ribosomal subunit.

Its function is as follows. GTPase that plays an essential role in the late steps of ribosome biogenesis. This chain is GTPase Der, found in Synechococcus sp. (strain RCC307).